The following is an 863-amino-acid chain: Alanine--tRNA ligase (863 aa).

Zn(2+) is bound by residues His-552, His-556, Cys-654, and His-658.

Belongs to the class-II aminoacyl-tRNA synthetase family. Zn(2+) serves as cofactor.

The protein resides in the cytoplasm. The catalysed reaction is tRNA(Ala) + L-alanine + ATP = L-alanyl-tRNA(Ala) + AMP + diphosphate. Functionally, catalyzes the attachment of alanine to tRNA(Ala) in a two-step reaction: alanine is first activated by ATP to form Ala-AMP and then transferred to the acceptor end of tRNA(Ala). Also edits incorrectly charged Ser-tRNA(Ala) and Gly-tRNA(Ala) via its editing domain. In Nitrosomonas europaea (strain ATCC 19718 / CIP 103999 / KCTC 2705 / NBRC 14298), this protein is Alanine--tRNA ligase.